Consider the following 184-residue polypeptide: Protein GrpE (184 aa).

Positions 1 to 35 (MTQENQNPPPEQEDVAADPQVNEAAASEPAAVKTP) are disordered.

This sequence belongs to the GrpE family. Homodimer.

The protein localises to the cytoplasm. Functionally, participates actively in the response to hyperosmotic and heat shock by preventing the aggregation of stress-denatured proteins, in association with DnaK and GrpE. It is the nucleotide exchange factor for DnaK and may function as a thermosensor. Unfolded proteins bind initially to DnaJ; upon interaction with the DnaJ-bound protein, DnaK hydrolyzes its bound ATP, resulting in the formation of a stable complex. GrpE releases ADP from DnaK; ATP binding to DnaK triggers the release of the substrate protein, thus completing the reaction cycle. Several rounds of ATP-dependent interactions between DnaJ, DnaK and GrpE are required for fully efficient folding. This chain is Protein GrpE, found in Polynucleobacter asymbioticus (strain DSM 18221 / CIP 109841 / QLW-P1DMWA-1) (Polynucleobacter necessarius subsp. asymbioticus).